A 118-amino-acid chain; its full sequence is Large ribosomal subunit protein bL19 (118 aa).

It belongs to the bacterial ribosomal protein bL19 family.

In terms of biological role, this protein is located at the 30S-50S ribosomal subunit interface and may play a role in the structure and function of the aminoacyl-tRNA binding site. The sequence is that of Large ribosomal subunit protein bL19 (rplS) from Serratia marcescens.